Reading from the N-terminus, the 136-residue chain is Small ribosomal subunit protein uS19 (136 aa).

It belongs to the universal ribosomal protein uS19 family.

In terms of biological role, protein S19 forms a complex with S13 that binds strongly to the 16S ribosomal RNA. This is Small ribosomal subunit protein uS19 from Methanosarcina mazei (strain ATCC BAA-159 / DSM 3647 / Goe1 / Go1 / JCM 11833 / OCM 88) (Methanosarcina frisia).